The primary structure comprises 211 residues: Endo-1,4-beta-xylanase 5 (211 aa).

The signal sequence occupies residues 1-16 (MKVTAAFASLLLTAFA). Residues 19 to 210 (APEPVLVSRS…GVGSASVTIS (192 aa)) form the GH11 domain. The Nucleophile role is filled by glutamate 106. Glutamate 197 serves as the catalytic Proton donor.

Belongs to the glycosyl hydrolase 11 (cellulase G) family.

It localises to the secreted. It catalyses the reaction Endohydrolysis of (1-&gt;4)-beta-D-xylosidic linkages in xylans.. It participates in glycan degradation; xylan degradation. Functionally, endo-1,4-beta-xylanase involved in the hydrolysis of xylan, a major structural heterogeneous polysaccharide found in plant biomass representing the second most abundant polysaccharide in the biosphere, after cellulose. This Aspergillus niger protein is Endo-1,4-beta-xylanase 5 (XYN5).